The sequence spans 166 residues: NAD(P)H-quinone oxidoreductase subunit I, chloroplastic (166 aa).

2 consecutive 4Fe-4S ferredoxin-type domains span residues 55–84 (GRIHFEFDKCIACEVCVRVCPIDLPVVDWK) and 95–124 (LNYSIDFGICIFCGNCVEYCPTNCLSMTEE). Residues cysteine 64, cysteine 67, cysteine 70, cysteine 74, cysteine 104, cysteine 107, cysteine 110, and cysteine 114 each contribute to the [4Fe-4S] cluster site.

This sequence belongs to the complex I 23 kDa subunit family. As to quaternary structure, NDH is composed of at least 16 different subunits, 5 of which are encoded in the nucleus. It depends on [4Fe-4S] cluster as a cofactor.

It localises to the plastid. The protein localises to the chloroplast thylakoid membrane. The catalysed reaction is a plastoquinone + NADH + (n+1) H(+)(in) = a plastoquinol + NAD(+) + n H(+)(out). It carries out the reaction a plastoquinone + NADPH + (n+1) H(+)(in) = a plastoquinol + NADP(+) + n H(+)(out). In terms of biological role, NDH shuttles electrons from NAD(P)H:plastoquinone, via FMN and iron-sulfur (Fe-S) centers, to quinones in the photosynthetic chain and possibly in a chloroplast respiratory chain. The immediate electron acceptor for the enzyme in this species is believed to be plastoquinone. Couples the redox reaction to proton translocation, and thus conserves the redox energy in a proton gradient. The protein is NAD(P)H-quinone oxidoreductase subunit I, chloroplastic of Chaenactis santolinoides (Santolina pincushion).